The chain runs to 108 residues: Iron-sulfur cluster assembly protein CyaY (108 aa).

The protein belongs to the frataxin family.

Its function is as follows. Involved in iron-sulfur (Fe-S) cluster assembly. May act as a regulator of Fe-S biogenesis. In Burkholderia mallei (strain NCTC 10247), this protein is Iron-sulfur cluster assembly protein CyaY.